The following is a 213-amino-acid chain: MDRENILKAVKEARSLAKPRNFTQSLDLIINLKELDLSRPENRLKEQVVLPNGRGKEPKIAVIAKGDLAAQAEEMGLTVIRQDELEELGKNKKMAKKIANEHDFFIAQADMMPLVGKTLGPVLGPRGKMPQPVPANANLTPLVERLKKTVLINTRDKPLFHVLVGNEKMSDEELAENIEAILNTVSRKYEKGLYHVKSAYTKLTMGPPAQIEK.

Belongs to the universal ribosomal protein uL1 family. As to quaternary structure, part of the 50S ribosomal subunit.

Its function is as follows. Probably involved in E site tRNA release. Binds directly to 23S rRNA. Functionally, protein L1 is also a translational repressor protein, it controls the translation of its operon by binding to its mRNA. This Methanothermococcus thermolithotrophicus (Methanococcus thermolithotrophicus) protein is Large ribosomal subunit protein uL1.